The chain runs to 769 residues: Integrin beta-2 (769 aa).

The signal sequence occupies residues 1-22 (MLRQRPQLLLLAGLLALQSVLS). The residue at position 23 (Gln23) is a Pyrrolidone carboxylic acid. The Extracellular portion of the chain corresponds to 23 to 700 (QECTNYKVST…DMLECVKGPN (678 aa)). The PSI domain maps to 24 to 74 (ECTNYKVSTCRDCIESGPGCAWCQKLNFTGQGEPDSIRCDTRAELLSKGCP). Intrachain disulfides connect Cys25/Cys43, Cys33/Cys447, Cys36/Cys62, Cys46/Cys73, Cys191/Cys198, Cys246/Cys286, Cys386/Cys400, Cys420/Cys445, Cys449/Cys467, Cys459/Cys470, Cys472/Cys481, Cys483/Cys514, Cys497/Cys512, Cys506/Cys517, Cys519/Cys534, Cys536/Cys559, Cys541/Cys557, Cys549/Cys562, Cys564/Cys573, Cys575/Cys598, Cys582/Cys596, Cys590/Cys601, Cys603/Cys612, Cys615/Cys618, Cys622/Cys662, Cys628/Cys647, Cys631/Cys643, and Cys670/Cys695. 2 N-linked (GlcNAc...) asparagine glycosylation sites follow: Asn50 and Asn116. In terms of domain architecture, VWFA spans 124–363 (GYPIDLYYLM…ELIKNAYNKL (240 aa)). The Mg(2+) site is built by Ser136 and Ser138. Positions 138, 141, 142, and 173 each coordinate Ca(2+). The Ca(2+) site is built by Asn229, Asp231, Pro233, and Glu234. Glu234 serves as a coordination point for Mg(2+). An N-linked (GlcNAc...) asparagine glycan is attached at Asn254. Residues Asp264 and Glu347 each contribute to the Ca(2+) site. The Cell attachment site signature appears at 397 to 399 (RGD). I-EGF domains are found at residues 449 to 482 (CRDASRDGSICGGRGSMECGVCRCDAGYIGKNCE), 483 to 535 (CQTQ…QFCE), 536 to 574 (CDNVNCERYDGQVCGGEKRGLCFCGTCRCDEQYEGSACQ), and 575 to 613 (CLKSTQGCLNLDGVECSGRGRCRCNVCQCDPGYQPPLCS). N-linked (GlcNAc...) asparagine glycosylation is present at Asn501. Asn642 carries an N-linked (GlcNAc...) asparagine glycan. The helical transmembrane segment at 701 to 723 (IAAIVGGTVGGVVLVGILLLVIW) threads the bilayer. The Cytoplasmic segment spans residues 724–769 (KALTHLSDLREYHRFEKEKLKSQWNNDNPLFKSATTTVMNPKFAES). Phosphoserine occurs at positions 745 and 756. Phosphothreonine occurs at positions 758 and 760.

This sequence belongs to the integrin beta chain family. In terms of assembly, heterodimer of an alpha and a beta subunit. The ITGB2 beta subunit associates with the ITGAL, ITGAM, ITGAX or ITGAD alpha subunits. Found in a complex with CD177 and ITGAM/CD11b. Interacts with FGR. Interacts with COPS5 and RANBP9. Interacts with FLNA (via filamin repeats 4, 9, 12, 17, 19, 21, and 23). Interacts with THBD. Both Ser-745 and Ser-756 become phosphorylated when T-cells are exposed to phorbol esters. Phosphorylation on Thr-758 (but not on Ser-756) allows interaction with 14-3-3 proteins.

It localises to the cell membrane. Its subcellular location is the membrane raft. Functionally, integrin ITGAL/ITGB2 is a receptor for ICAM1, ICAM2, ICAM3 and ICAM4. Integrin ITGAL/ITGB2 is also a receptor for the secreted form of ubiquitin-like protein ISG15; the interaction is mediated by ITGAL. Integrins ITGAM/ITGB2 and ITGAX/ITGB2 are receptors for the iC3b fragment of the third complement component and for fibrinogen. Integrin ITGAX/ITGB2 recognizes the sequence G-P-R in fibrinogen alpha-chain. Integrin ITGAM/ITGB2 recognizes P1 and P2 peptides of fibrinogen gamma chain. Integrin ITGAM/ITGB2 is also a receptor for factor X. Integrin ITGAD/ITGB2 is a receptor for ICAM3 and VCAM1. Contributes to natural killer cell cytotoxicity. Involved in leukocyte adhesion and transmigration of leukocytes including T-cells and neutrophils. Triggers neutrophil transmigration during lung injury through PTK2B/PYK2-mediated activation. Integrin ITGAL/ITGB2 in association with ICAM3, contributes to apoptotic neutrophil phagocytosis by macrophages. This Bos taurus (Bovine) protein is Integrin beta-2 (ITGB2).